Consider the following 256-residue polypeptide: DNA repair protein RecO (256 aa).

It belongs to the RecO family.

Involved in DNA repair and RecF pathway recombination. This chain is DNA repair protein RecO, found in Rhizobium etli (strain ATCC 51251 / DSM 11541 / JCM 21823 / NBRC 15573 / CFN 42).